A 1323-amino-acid chain; its full sequence is Phosphoribosylformylglycinamidine synthase (1323 aa).

Residues 312-323, 391-393, and A691 each bind ATP; these read GAATGSGGEIRD and NGY. Residues D692, E733, N737, and D903 each contribute to the Mg(2+) site. Position 905 (S905) interacts with ATP. The Glutamine amidotransferase type-1 domain occupies 1062–1306; that stretch reads VAILREQGVN…YPHSKASEWG (245 aa). Residue C1156 is the Nucleophile of the active site. Residues H1284 and E1286 contribute to the active site.

It in the N-terminal section; belongs to the FGAMS family.

Its subcellular location is the cytoplasm. The enzyme catalyses N(2)-formyl-N(1)-(5-phospho-beta-D-ribosyl)glycinamide + L-glutamine + ATP + H2O = 2-formamido-N(1)-(5-O-phospho-beta-D-ribosyl)acetamidine + L-glutamate + ADP + phosphate + H(+). It functions in the pathway purine metabolism; IMP biosynthesis via de novo pathway; 5-amino-1-(5-phospho-D-ribosyl)imidazole from N(2)-formyl-N(1)-(5-phospho-D-ribosyl)glycinamide: step 1/2. Its function is as follows. Phosphoribosylformylglycinamidine synthase involved in the purines biosynthetic pathway. Catalyzes the ATP-dependent conversion of formylglycinamide ribonucleotide (FGAR) and glutamine to yield formylglycinamidine ribonucleotide (FGAM) and glutamate. In Schizosaccharomyces pombe (strain 972 / ATCC 24843) (Fission yeast), this protein is Phosphoribosylformylglycinamidine synthase (ade3).